Here is an 839-residue protein sequence, read N- to C-terminus: Autophagy-related protein 9A (839 aa).

Ala-2 carries the post-translational modification N-acetylalanine. At 2–61 (AQFDTEYQRLEASYSDSPPGEEDLLVHVAEGSKSPWHHIENLDLFFSRVYNLHQKNGFTC) the chain is on the cytoplasmic side. Residues 8 to 11 (YQRL) carry the Tyrosine-based sorting signal motif. 3 positions are modified to phosphoserine: Ser-14, Ser-16, and Ser-18. A helical membrane pass occupies residues 62-84 (MLIGEIFELMQFLFVVAFTTFLV). The Lumenal portion of the chain corresponds to 85-128 (SCVDYDILFANKMVNHSLHPTEPVKVTLPDAFLPAQVCSARIQE). Asn-99 is a glycosylation site (N-linked (GlcNAc...) asparagine). A helical membrane pass occupies residues 129–154 (NGSLITILVIAGVFWIHRLIKFIYNI). Residues 155-290 (CCYWEIHSFY…ELAQRLSNRI (136 aa)) lie on the Cytoplasmic side of the membrane. The stretch at 291–301 (LWIGIANFLLC) is an intramembrane region. Residues 302–319 (PLILIWQILYAFFSYAEV) are Cytoplasmic-facing. An intramembrane segment occupies 320-328 (LKREPGALG). At 329 to 371 (ARCWSLYGRCYLRHFNELEHELQSRLNRGYKPASKYMNCFLSP) the chain is on the cytoplasmic side. A helical membrane pass occupies residues 372 to 397 (LLTLLAKNGAFFAGSILAVLIALTIY). The Lumenal segment spans residues 398 to 406 (DEDVLAVEH). A helical transmembrane segment spans residues 407 to 424 (VLTTVTLLGVTVTVCRSF). The Cytoplasmic segment spans residues 425 to 470 (IPDQHMVFCPEQLLRVILAHIHYMPDHWQGNAHRSQTRDEFAQLFQ). The stretch at 471–480 (YKAVFILEEL) is an intramembrane region. Over 481-483 (LSP) the chain is Cytoplasmic. An intramembrane segment occupies 484–492 (IVTPLILIF). Topologically, residues 493–839 (CLRPRALEII…DELPPQVHKV (347 aa)) are cytoplasmic. Phosphoserine is present on residues Ser-656, Ser-735, Ser-738, Ser-741, and Ser-828. 2 disordered regions span residues 656 to 689 (SPLQ…SSVW) and 717 to 839 (HKQQ…VHKV). The span at 724–736 (EPERHVWHRRESD) shows a compositional bias: basic and acidic residues. Composition is skewed to acidic residues over residues 737–747 (ESGESAPEEGG) and 823–832 (VPEEGSEDEL).

This sequence belongs to the ATG9 family. Homotrimer; forms a homotrimer with a central pore that forms a path between the two membrane leaflets. Interacts (via cytoplasmic its C-terminus) with ATG2A. Interacts with SUPT20H. Interacts (via the tyrosine-based sorting signal motif) with AP4M1; promoting association with the AP-4 complex. Interacts with ARFIP1 and ARFIP2. Interacts with PI4K2A and PI4KB. Interacts with ATG4A; the interaction is direct and promotes ATG9A trafficking. Post-translationally, ufmylated in a DDRGK1 dependent manner.

Its subcellular location is the preautophagosomal structure membrane. It is found in the cytoplasmic vesicle. It localises to the autophagosome membrane. The protein resides in the golgi apparatus. The protein localises to the trans-Golgi network membrane. Its subcellular location is the late endosome membrane. It is found in the recycling endosome membrane. It localises to the endoplasmic reticulum membrane. The protein resides in the mitochondrion membrane. The catalysed reaction is a 1,2-diacyl-sn-glycero-3-phosphocholine(in) = a 1,2-diacyl-sn-glycero-3-phosphocholine(out). It catalyses the reaction a 1,2-diacyl-sn-glycero-3-phospho-L-serine(in) = a 1,2-diacyl-sn-glycero-3-phospho-L-serine(out). It carries out the reaction a 1,2-diacyl-sn-glycero-3-phosphoethanolamine(in) = a 1,2-diacyl-sn-glycero-3-phosphoethanolamine(out). Phospholipid scramblase involved in autophagy by mediating autophagosomal membrane expansion. Cycles between the preautophagosomal structure/phagophore assembly site (PAS) and the cytoplasmic vesicle pool and supplies membrane for the growing autophagosome. Lipid scramblase activity plays a key role in preautophagosomal structure/phagophore assembly by distributing the phospholipids that arrive through ATG2 (ATG2A or ATG2B) from the cytoplasmic to the luminal leaflet of the bilayer, thereby driving autophagosomal membrane expansion. Also required to supply phosphatidylinositol 4-phosphate to the autophagosome initiation site by recruiting the phosphatidylinositol 4-kinase beta (PI4KB) in a process dependent on ARFIP2, but not ARFIP1. In addition to autophagy, also plays a role in necrotic cell death. This Rattus norvegicus (Rat) protein is Autophagy-related protein 9A.